A 349-amino-acid polypeptide reads, in one-letter code: Protein AMBP (349 aa).

The N-terminal stretch at 1–19 is a signal peptide; sequence MQGLRTLFLLLTACLASRA. The N-linked (GlcNAc...) asparagine glycan is linked to Asn33. Positions 52 and 110 each coordinate 3-hydroxy-L-kynurenine. A disulfide bond links Cys90 and Cys187. A glycan (N-linked (GlcNAc...) asparagine) is linked at Asn114. Positions 136 and 148 each coordinate 3-hydroxy-L-kynurenine. Ser214 is a glycosylation site (O-linked (Xyl...) (chondroitin sulfate) serine). 6 disulfide bridges follow: Cys230-Cys280, Cys239-Cys263, Cys255-Cys276, Cys286-Cys336, Cys295-Cys319, and Cys311-Cys332. BPTI/Kunitz inhibitor domains are found at residues 230-280 and 286-336; these read CQLN…LQTC and CNLP…KEYC. A glycan (N-linked (GlcNAc...) asparagine) is linked at Asn233.

It in the N-terminal section; belongs to the calycin superfamily. Lipocalin family. As to quaternary structure, monomer. Homodimer. In plasma, it occurs as a monomer or dimer and in covalently-linked complexes with immunoglobulin A (IgA), ALB/albumin and F2/prothrombin. Chromophore-bound alpha-1-microglobulin interacts with the constant region of immunoglobulin A. Chromophore-bound alpha-1-microglobulin interacts with ALB with molar ratio 2:1 and 1:1; this interaction does not prevent fatty acid binding to ALB. Interacts with F2/prothrombin (via N-terminus) with molar ratio 2:1 and 1:1; this interaction does not prevent the activation of prothrombin to thrombin. Interacts with NDUFAB1, a subunit of mitochondrial complex I. Interacts with FN1. I-alpha-I plasma protease inhibitors are assembled from one or two heavy chains (HC) and one light chain, bikunin. Inter-alpha-inhibitor (I-alpha-I) is composed of ITIH1/HC1, ITIH2/HC2 and bikunin, and pre-alpha-inhibitor (P-alpha-I) of ITIH3/HC3 and bikunin. Interacts with TNFAIP6 (via Link domain). In terms of assembly, monomer. Also occurs as a complex with tryptase in mast cells. In terms of processing, the precursor is proteolytically processed into separately functioning proteins. 3-hydroxykynurenine, an oxidized tryptophan metabolite that is common in biological fluids, reacts with Cys-53, Lys-111, Lys-137, and Lys-149 to form heterogeneous polycyclic chromophores including hydroxanthommatin. The reaction by alpha-1-microglobulin is autocatalytic; the human protein forms chromophore even when expressed in insect and bacterial cells. The chromophore can react with accessible cysteines forming non-reducible thioether cross-links with other molecules of alpha-1-microglobulin or with other proteins such as Ig alpha-1 chain C region 'Cys-352'. Post-translationally, heavy chains are interlinked with bikunin via a chondroitin 4-sulfate bridge to the C-terminal aspartate. In terms of processing, proteolytically cleaved by PRSS3 at Kunitz domain 2. As to expression, expressed by the liver and secreted in plasma (at protein level).

The protein localises to the secreted. Its subcellular location is the endoplasmic reticulum. It is found in the cytoplasm. It localises to the cytosol. The protein resides in the cell membrane. The protein localises to the nucleus membrane. Its subcellular location is the mitochondrion inner membrane. It is found in the extracellular space. It localises to the extracellular matrix. Antioxidant and tissue repair protein with reductase, heme-binding and radical-scavenging activities. Removes and protects against harmful oxidants and repairs macromolecules in intravascular and extravascular spaces and in intracellular compartments. Intravascularly, plays a regulatory role in red cell homeostasis by preventing heme- and reactive oxygen species-induced cell damage. Binds and degrades free heme to protect fetal and adult red blood cells from hemolysis. Reduces extracellular methemoglobin, a Fe3+ (ferric) form of hemoglobin that cannot bind oxygen, back to the Fe2+ (ferrous) form deoxyhemoglobin, which has oxygen-carrying potential. Upon acute inflammation, inhibits oxidation of low-density lipoprotein particles by MPO and limits vascular damage. Extravascularly, protects from oxidation products formed on extracellular matrix structures and cell membranes. Catalyzes the reduction of carbonyl groups on oxidized collagen fibers and preserves cellular and extracellular matrix ultrastructures. Importantly, counteracts the oxidative damage at blood-placenta interface, preventing leakage of free fetal hemoglobin into the maternal circulation. Intracellularly, has a role in maintaining mitochondrial redox homeostasis. Bound to complex I of the respiratory chain of mitochondria, may scavenge free radicals and preserve mitochondrial ATP synthesis. Protects renal tubule epithelial cells from heme-induced oxidative damage to mitochondria. Reduces cytochrome c from Fe3+ (ferric) to the Fe2+ (ferrous) state through formation of superoxide anion radicals in the presence of ascorbate or NADH/NADPH electron donor cofactors, ascorbate being the preferred cofactor. Has a chaperone role in facilitating the correct folding of bikunin in the endoplasmic reticulum compartment. In terms of biological role, kunitz-type serine protease inhibitor and structural component of extracellular matrix with a role in extracellular space remodeling and cell adhesion. Among others, has antiprotease activity toward kallikrein, a protease involved in airway inflammation; inhibits GZMK/granzyme, a granule-stored serine protease involved in NK and T cell cytotoxic responses; and inhibits PLG/plasmin, a protease required for activation of matrix metalloproteinases. As part of I-alpha-I complex, provides for the heavy chains to be transferred from I-alpha-I complex to hyaluronan in the presence of TNFAIP6, in a dynamic process that releases free bikunin and remodels extracellular matrix proteoglycan structures. Free bikunin, but not its heavy chain-bound form, acts as a potent protease inhibitor in airway secretions. Part of hyaluronan-rich extracellular matrix that surrounds oocyte during cumulus oophorus expansion, an indispensable process for proper ovulation. Also inhibits calcium oxalate crystallization. Its function is as follows. Kunitz-type serine protease inhibitor. Has high catalytic efficiency for F10/blood coagulation factor Xa and may act as an anticoagulant by inhibiting prothrombin activation. Inhibits trypsin and mast cell CMA1/chymase and tryptase proteases. This is Protein AMBP (Ambp) from Mus musculus (Mouse).